Here is an 85-residue protein sequence, read N- to C-terminus: uncharacterized protein (85 aa).

This is an uncharacterized protein from Bacillus subtilis (strain 168).